Reading from the N-terminus, the 188-residue chain is Pyridoxal 5'-phosphate synthase subunit PdxT (188 aa).

46-48 lines the L-glutamine pocket; it reads GES. The active-site Nucleophile is the Cys78. Residues Arg105 and 134–135 each bind L-glutamine; that span reads IR. Residues His170 and Glu172 each act as charge relay system in the active site.

This sequence belongs to the glutaminase PdxT/SNO family. As to quaternary structure, in the presence of PdxS, forms a dodecamer of heterodimers. Only shows activity in the heterodimer.

The enzyme catalyses aldehydo-D-ribose 5-phosphate + D-glyceraldehyde 3-phosphate + L-glutamine = pyridoxal 5'-phosphate + L-glutamate + phosphate + 3 H2O + H(+). The catalysed reaction is L-glutamine + H2O = L-glutamate + NH4(+). The protein operates within cofactor biosynthesis; pyridoxal 5'-phosphate biosynthesis. Catalyzes the hydrolysis of glutamine to glutamate and ammonia as part of the biosynthesis of pyridoxal 5'-phosphate. The resulting ammonia molecule is channeled to the active site of PdxS. The polypeptide is Pyridoxal 5'-phosphate synthase subunit PdxT (Thermotoga neapolitana (strain ATCC 49049 / DSM 4359 / NBRC 107923 / NS-E)).